The chain runs to 387 residues: Peroxisomal membrane protein LPX1 (387 aa).

The tract at residues 385-387 (QKL) is peroxisomal targeting signal type 1.

It localises to the peroxisome matrix. Its function is as follows. Has acyl esterase, lipase and phospholipase A activity. The chain is Peroxisomal membrane protein LPX1 (LPX1) from Saccharomyces cerevisiae (strain ATCC 204508 / S288c) (Baker's yeast).